Reading from the N-terminus, the 505-residue chain is Sucrose porin (505 aa).

Residues 1–22 (MYKKRKLAILIALLTGTAAAHG) form the signal peptide. Residues 44-94 (ETRASTAESRAASAEQKVQQLTQQQQQTQATTQQVARRTTQLEEKAERPGG) form a disordered region. The span at 46–82 (RASTAESRAASAEQKVQQLTQQQQQTQATTQQVARRT) shows a compositional bias: low complexity. The segment covering 83–93 (TQLEEKAERPG) has biased composition (basic and acidic residues).

The protein belongs to the porin LamB (TC 1.B.3) family. As to quaternary structure, homotrimer.

It localises to the cell outer membrane. In terms of biological role, porin for sucrose uptake. The sequence is that of Sucrose porin (scrY) from Klebsiella pneumoniae.